The sequence spans 182 residues: Ribulose bisphosphate carboxylase small subunit, chloroplastic (182 aa).

The N-terminal 58 residues, 1–58, are a transit peptide targeting the chloroplast; that stretch reads MASSMISSATIATVNCSSPAQANMVAPFTGLKSASAFPVTRKANNDITSLASNGGRVQ.

Belongs to the RuBisCO small chain family. Heterohexadecamer of 8 large and 8 small subunits.

Its subcellular location is the plastid. The protein resides in the chloroplast. Functionally, ruBisCO catalyzes two reactions: the carboxylation of D-ribulose 1,5-bisphosphate, the primary event in carbon dioxide fixation, as well as the oxidative fragmentation of the pentose substrate. Both reactions occur simultaneously and in competition at the same active site. Although the small subunit is not catalytic it is essential for maximal activity. This Gossypium hirsutum (Upland cotton) protein is Ribulose bisphosphate carboxylase small subunit, chloroplastic.